A 363-amino-acid chain; its full sequence is Uroporphyrinogen decarboxylase (363 aa).

Residues 36-40 (RQAGR), Asp-85, Tyr-160, Ser-215, and His-339 contribute to the substrate site.

This sequence belongs to the uroporphyrinogen decarboxylase family. As to quaternary structure, homodimer.

It localises to the cytoplasm. The enzyme catalyses uroporphyrinogen III + 4 H(+) = coproporphyrinogen III + 4 CO2. Its pathway is porphyrin-containing compound metabolism; protoporphyrin-IX biosynthesis; coproporphyrinogen-III from 5-aminolevulinate: step 4/4. Its function is as follows. Catalyzes the decarboxylation of four acetate groups of uroporphyrinogen-III to yield coproporphyrinogen-III. The chain is Uroporphyrinogen decarboxylase from Saccharopolyspora erythraea (strain ATCC 11635 / DSM 40517 / JCM 4748 / NBRC 13426 / NCIMB 8594 / NRRL 2338).